Here is a 397-residue protein sequence, read N- to C-terminus: Tryptophan synthase beta chain (397 aa).

Lys86 carries the N6-(pyridoxal phosphate)lysine modification.

The protein belongs to the TrpB family. Tetramer of two alpha and two beta chains. It depends on pyridoxal 5'-phosphate as a cofactor.

It catalyses the reaction (1S,2R)-1-C-(indol-3-yl)glycerol 3-phosphate + L-serine = D-glyceraldehyde 3-phosphate + L-tryptophan + H2O. It participates in amino-acid biosynthesis; L-tryptophan biosynthesis; L-tryptophan from chorismate: step 5/5. The beta subunit is responsible for the synthesis of L-tryptophan from indole and L-serine. The sequence is that of Tryptophan synthase beta chain from Edwardsiella ictaluri (strain 93-146).